A 4146-amino-acid chain; its full sequence is DNA-dependent protein kinase catalytic subunit (4146 aa).

HEAT repeat units lie at residues 308–343 (DDYQ…LKQI), 925–962 (VIYL…VAFM), 1026–1062 (QDTV…LRWS), and 1075–1111 (PVNT…YRDF). TPR repeat units follow at residues 1745 to 1778 (PMKS…SQSP) and 1974 to 2007 (VFSE…QRNY). Ser2075 is subject to Phosphoserine; by autocatalysis. Residue Thr2631 is modified to Phosphothreonine; by autocatalysis. Ser2634 is modified (phosphoserine; by autocatalysis). Thr2659 and Thr2668 each carry phosphothreonine; by autocatalysis. The 684-residue stretch at 2873-3556 (FIACVQDMCY…VYPFMVSGES (684 aa)) folds into the FAT domain. Positions 3739-4071 (FDERVSVMAS…IHCAKRKLDG (333 aa)) constitute a PI3K/PI4K catalytic domain. Residues 3745-3751 (VMASIRK) are G-loop. The catalytic loop stretch occupies residues 3937 to 3945 (GIGDRHLSN). Residues 3957–3982 (GIDFGHAFGTATQFLPVPELMPFRLT) form an activation loop region. Positions 4114-4146 (DGLTEETQVQCLIDQATDPNILGRVWKGWEPWI) constitute an FATC domain.

This sequence belongs to the PI3/PI4-kinase family. DNA-PK is a heterotrimer of prkdc and the Ku dimer (composed of xrcc6/Ku70 and xrcc5/Ku86). Component of the core long-range non-homologous end joining (NHEJ) complex (also named DNA-PK complex) composed of prkdc, lig4, xrcc4, xrcc6/ku70, xrcc5/ku86 and nhej1/xlf. Additional component of the NHEJ complex includes paxx. Following autophosphorylation, prkdc dissociates from DNA. In terms of processing, autophosphorylated at two clusters, the T2609 cluster and the S2056 cluster. Autophosphorylated on Ser-2075, Thr-2631, Thr-2659 and Thr-2668. Ser-2075 and Thr-2668 are DNA damage-inducible phosphorylation sites (inducible with ionizing radiation, IR) dephosphorylated by PPP5C. Autophosphorylation induces a conformational change that leads to remodeling of the DNA-PK complex, requisite for efficient end processing and DNA repair. Autophosphorylation in trans within DNA-PK complexes loaded on DNA ends leads to the dissociation of PRKDC from DNA and the transition into the short-range NHEJ complex. Autophosphorylation of the T2609 cluster is required for hematopoietic development and protein synthesis in erythrocytes precursors.

The protein localises to the nucleus. It localises to the nucleolus. The catalysed reaction is L-seryl-[protein] + ATP = O-phospho-L-seryl-[protein] + ADP + H(+). The enzyme catalyses L-threonyl-[protein] + ATP = O-phospho-L-threonyl-[protein] + ADP + H(+). In terms of biological role, serine/threonine-protein kinase that acts as a molecular sensor for DNA damage. Involved in DNA nonhomologous end joining (NHEJ) required for double-strand break (DSB) repair and V(D)J recombination. Must be bound to DNA to express its catalytic properties. Promotes processing of hairpin DNA structures in V(D)J recombination by activation of the hairpin endonuclease artemis (DCLRE1C). Recruited by XRCC5 and XRCC6 to DNA ends and is required to (1) protect and align broken ends of DNA, thereby preventing their degradation, (2) and sequester the DSB for repair by NHEJ. Acts as a scaffold protein to aid the localization of DNA repair proteins to the site of damage. The assembly of the DNA-PK complex at DNA ends is also required for the NHEJ ligation step. Found at the ends of chromosomes, suggesting a further role in the maintenance of telomeric stability and the prevention of chromosomal end fusion. As part of the DNA-PK complex, involved in the early steps of ribosome assembly by promoting the processing of precursor rRNA into mature 18S rRNA in the small-subunit processome. Recognizes the substrate consensus sequence [ST]-Q. Phosphorylates 'Ser-139' of histone variant H2AX, thereby regulating DNA damage response mechanism. The sequence is that of DNA-dependent protein kinase catalytic subunit (prkdc) from Xenopus laevis (African clawed frog).